Consider the following 1136-residue polypeptide: Nitric oxide synthase, inducible (1136 aa).

Residues C107 and C112 each contribute to the Zn(2+) site. Heme b is bound at residue C197. Q260, W369, Y370, and E374 together coordinate L-arginine. (6R)-L-erythro-5,6,7,8-tetrahydrobiopterin-binding residues include R378, V459, W460, and F473. Residue Y488 participates in heme b binding. Residues 512-532 (LSILAKAVLLASLLLQKTMAA) are calmodulin-binding. Positions 536–674 (VTVIYATETG…AFRTWAVTAF (139 aa)) constitute a Flavodoxin-like domain. Positions 542, 543, 544, 546, 547, 588, 589, 625, 632, 658, and 662 each coordinate FMN. The FAD-binding FR-type domain occupies 727-967 (KNVIPMKLKF…VRSADGFRLP (241 aa)). R747 contacts NADP(+). FAD-binding residues include H769, R903, Y905, S906, T921, A923, Y927, V940, C941, and S942. 8 residues coordinate NADP(+): T981, R1014, S1043, R1044, K1050, Y1052, Q1054, and D1087.

The protein belongs to the NOS family. As to quaternary structure, homodimer. Heme b serves as cofactor. It depends on FAD as a cofactor. FMN is required as a cofactor. Requires (6R)-L-erythro-5,6,7,8-tetrahydrobiopterin as cofactor.

It localises to the cytoplasm. The protein resides in the cytosol. The catalysed reaction is 2 L-arginine + 3 NADPH + 4 O2 + H(+) = 2 L-citrulline + 2 nitric oxide + 3 NADP(+) + 4 H2O. Its activity is regulated as follows. Not stimulated by calcium/calmodulin. Its function is as follows. Produces nitric oxide (NO) which is a messenger molecule with diverse functions throughout the body. NO may serve as both a paracrine and autocrine signal for modulating osteoclast bone resorption. Also has nitrosylase activity and mediates cysteine S-nitrosylation of cytoplasmic target proteins such COX2. This is Nitric oxide synthase, inducible (NOS2) from Gallus gallus (Chicken).